Here is a 195-residue protein sequence, read N- to C-terminus: Imidazoleglycerol-phosphate dehydratase (195 aa).

It belongs to the imidazoleglycerol-phosphate dehydratase family.

The protein localises to the cytoplasm. The enzyme catalyses D-erythro-1-(imidazol-4-yl)glycerol 3-phosphate = 3-(imidazol-4-yl)-2-oxopropyl phosphate + H2O. It participates in amino-acid biosynthesis; L-histidine biosynthesis; L-histidine from 5-phospho-alpha-D-ribose 1-diphosphate: step 6/9. The sequence is that of Imidazoleglycerol-phosphate dehydratase from Heliobacterium modesticaldum (strain ATCC 51547 / Ice1).